The following is a 270-amino-acid chain: Diaminopimelate epimerase (270 aa).

Substrate contacts are provided by N15, Q49, and N66. C75 serves as the catalytic Proton donor. Substrate contacts are provided by residues 76 to 77 (GN), N155, N187, and 204 to 205 (ER). Residue C213 is the Proton acceptor of the active site. Position 214–215 (214–215 (GS)) interacts with substrate.

It belongs to the diaminopimelate epimerase family. Homodimer.

It is found in the cytoplasm. It carries out the reaction (2S,6S)-2,6-diaminopimelate = meso-2,6-diaminopimelate. Its pathway is amino-acid biosynthesis; L-lysine biosynthesis via DAP pathway; DL-2,6-diaminopimelate from LL-2,6-diaminopimelate: step 1/1. Catalyzes the stereoinversion of LL-2,6-diaminopimelate (L,L-DAP) to meso-diaminopimelate (meso-DAP), a precursor of L-lysine and an essential component of the bacterial peptidoglycan. In Rickettsia massiliae (strain Mtu5), this protein is Diaminopimelate epimerase.